An 801-amino-acid polypeptide reads, in one-letter code: Na(+)/H(+) antiporter subunit A (801 aa).

21 helical membrane-spanning segments follow: residues 4 to 21 (LHLA…IPFL), 28 to 50 (VHTG…PMIR), 80 to 102 (GLLF…IFYL), 109 to 128 (LGPF…GVVL), 132 to 154 (VMVL…GYWY), 166 to 188 (SLLI…YLIT), 203 to 222 (IAGH…GAFT), 229 to 251 (FYIW…HSAT), 266 to 288 (IFAF…MVWG), 301 to 323 (ILAF…SAAA), 338 to 360 (AAIF…VGII), 372 to 394 (LGGL…FSMA), 428 to 450 (VLFP…KLLF), 471 to 493 (VGML…FPNI), 526 to 548 (GVTT…YLSL), 594 to 616 (YLLY…KGGF), 626 to 647 (IGVY…TVFA), 654 to 671 (IIAL…FVIF), 676 to 698 (LALT…FYHL), 710 to 732 (FRMT…GIAS), and 772 to 789 (MFEI…YSMI).

It belongs to the CPA3 antiporters (TC 2.A.63) subunit A family. As to quaternary structure, forms a heterooligomeric complex that consists of seven subunits: MrpA, MrpB, MrpC, MrpD, MrpE, MrpF and MrpG.

It is found in the cell membrane. Its function is as follows. Mrp complex is a Na(+)/H(+) antiporter that is considered to be the major Na(+) excretion system in B.subtilis. Has a major role in Na(+) resistance and a minor role in Na(+)- and K(+)-dependent pH homeostasis as compared to TetB. MrpA may be the actual Na(+)/H(+) antiporter, although the six other Mrp proteins are all required for Na(+)/H(+) antiport activity and Na(+) resistance. MrpA is required for initiation of sporulation when external Na(+) concentration increases. Also transports Li(+) but not K(+), Ca(2+) or Mg(2+). The chain is Na(+)/H(+) antiporter subunit A (mrpA) from Bacillus subtilis (strain 168).